Reading from the N-terminus, the 859-residue chain is DNA mismatch repair protein MutS (859 aa).

G622 to S629 is a binding site for ATP.

Belongs to the DNA mismatch repair MutS family.

Its function is as follows. This protein is involved in the repair of mismatches in DNA. It is possible that it carries out the mismatch recognition step. This protein has a weak ATPase activity. The sequence is that of DNA mismatch repair protein MutS from Coxiella burnetii (strain Dugway 5J108-111).